We begin with the raw amino-acid sequence, 388 residues long: Succinate--CoA ligase [ADP-forming] subunit beta (388 aa).

An ATP-grasp domain is found at 9–244; sequence KQLFKEYGLP…PSQEDAREAH (236 aa). Residues lysine 46, 53-55, glutamate 99, threonine 102, and glutamate 107 contribute to the ATP site; that span reads GRG. The Mg(2+) site is built by asparagine 199 and aspartate 213. Residues asparagine 264 and 321–323 contribute to the substrate site; that span reads GIV.

It belongs to the succinate/malate CoA ligase beta subunit family. Heterotetramer of two alpha and two beta subunits. It depends on Mg(2+) as a cofactor.

The catalysed reaction is succinate + ATP + CoA = succinyl-CoA + ADP + phosphate. The enzyme catalyses GTP + succinate + CoA = succinyl-CoA + GDP + phosphate. Its pathway is carbohydrate metabolism; tricarboxylic acid cycle; succinate from succinyl-CoA (ligase route): step 1/1. In terms of biological role, succinyl-CoA synthetase functions in the citric acid cycle (TCA), coupling the hydrolysis of succinyl-CoA to the synthesis of either ATP or GTP and thus represents the only step of substrate-level phosphorylation in the TCA. The beta subunit provides nucleotide specificity of the enzyme and binds the substrate succinate, while the binding sites for coenzyme A and phosphate are found in the alpha subunit. This is Succinate--CoA ligase [ADP-forming] subunit beta from Alteromonas mediterranea (strain DSM 17117 / CIP 110805 / LMG 28347 / Deep ecotype).